We begin with the raw amino-acid sequence, 401 residues long: Tumor necrosis factor receptor superfamily member 11B (401 aa).

The signal sequence occupies residues 1 to 21 (MNKWLCCALLVLLDIIEWTTQ). TNFR-Cys repeat units follow at residues 24-62 (LPPKYLHYDPETGHQLLCDKCAPGTYLKQHCTVRRKTLC), 65-105 (CPDH…NRVC), 107-142 (CEEGRYLEIEFCLKHRSCPPGSGVVQAGTPERNTVC), and 145-185 (CPDG…DNVC). Disulfide bonds link Cys41/Cys54, Cys44/Cys62, Cys65/Cys80, Cys83/Cys97, Cys87/Cys105, Cys107/Cys118, Cys124/Cys142, and Cys145/Cys160. N-linked (GlcNAc...) asparagine glycosylation is present at Asn98. Asn165 and Asn178 each carry an N-linked (GlcNAc...) asparagine glycan. The cysteines at positions 166 and 185 are disulfide-linked. Death domains follow at residues 198-269 (DVTL…MVKK) and 283-365 (RHLG…THSL). Residue Asn289 is glycosylated (N-linked (GlcNAc...) asparagine).

In terms of assembly, homodimer. Interacts with TNFSF10 and TNFSF11. As to expression, highly expressed in liver, lung, stomach, intestines and calvaria. Highly expressed in decidua and placenta, and in embryo.

It localises to the secreted. Functionally, acts as a decoy receptor for TNFSF11/RANKL and thereby neutralizes its function in osteoclastogenesis. Inhibits the activation of osteoclasts and promotes osteoclast apoptosis in vitro. Bone homeostasis seems to depend on the local ratio between TNFSF11 and TNFRSF11B. May also play a role in preventing arterial calcification. May act as decoy receptor for TNFSF10/TRAIL and protect against apoptosis. TNFSF10/TRAIL binding blocks the inhibition of osteoclastogenesis. This Mus musculus (Mouse) protein is Tumor necrosis factor receptor superfamily member 11B (Tnfrsf11b).